The primary structure comprises 872 residues: Alanine--tRNA ligase (872 aa).

Zn(2+) contacts are provided by H567, H571, C669, and H673.

This sequence belongs to the class-II aminoacyl-tRNA synthetase family. It depends on Zn(2+) as a cofactor.

Its subcellular location is the cytoplasm. The enzyme catalyses tRNA(Ala) + L-alanine + ATP = L-alanyl-tRNA(Ala) + AMP + diphosphate. Catalyzes the attachment of alanine to tRNA(Ala) in a two-step reaction: alanine is first activated by ATP to form Ala-AMP and then transferred to the acceptor end of tRNA(Ala). Also edits incorrectly charged Ser-tRNA(Ala) and Gly-tRNA(Ala) via its editing domain. The protein is Alanine--tRNA ligase of Streptococcus suis (strain 98HAH33).